A 302-amino-acid chain; its full sequence is Ornithine carbamoyltransferase (302 aa).

Carbamoyl phosphate contacts are provided by residues 47 to 50 (STRT), Gln74, Arg98, and 125 to 128 (HPCQ). L-ornithine contacts are provided by residues Asn156, Asp220, and 224–225 (SM). Residues 260–261 (CL) and Arg288 contribute to the carbamoyl phosphate site.

This sequence belongs to the aspartate/ornithine carbamoyltransferase superfamily. OTCase family.

It is found in the cytoplasm. The enzyme catalyses carbamoyl phosphate + L-ornithine = L-citrulline + phosphate + H(+). It functions in the pathway amino-acid biosynthesis; L-arginine biosynthesis; L-arginine from L-ornithine and carbamoyl phosphate: step 1/3. Its function is as follows. Reversibly catalyzes the transfer of the carbamoyl group from carbamoyl phosphate (CP) to the N(epsilon) atom of ornithine (ORN) to produce L-citrulline. This is Ornithine carbamoyltransferase from Methanosphaera stadtmanae (strain ATCC 43021 / DSM 3091 / JCM 11832 / MCB-3).